A 275-amino-acid polypeptide reads, in one-letter code: NH(3)-dependent NAD(+) synthetase (275 aa).

47–54 (GISGGQDS) lines the ATP pocket. Residue Asp-53 participates in Mg(2+) binding. Residue Arg-141 coordinates deamido-NAD(+). ATP is bound at residue Thr-161. Mg(2+) is bound at residue Glu-166. Lys-174 and Asp-181 together coordinate deamido-NAD(+). Positions 190 and 212 each coordinate ATP. 261-262 (HK) is a deamido-NAD(+) binding site.

The protein belongs to the NAD synthetase family. In terms of assembly, homodimer.

It catalyses the reaction deamido-NAD(+) + NH4(+) + ATP = AMP + diphosphate + NAD(+) + H(+). Its pathway is cofactor biosynthesis; NAD(+) biosynthesis; NAD(+) from deamido-NAD(+) (ammonia route): step 1/1. Its function is as follows. Catalyzes the ATP-dependent amidation of deamido-NAD to form NAD. Uses ammonia as a nitrogen source. The polypeptide is NH(3)-dependent NAD(+) synthetase (Lacticaseibacillus casei (strain BL23) (Lactobacillus casei)).